The chain runs to 557 residues: Urocanate hydratase (557 aa).

Residues 1-20 form a disordered region; sequence MSNPRHNEREVRSPRGDELN. NAD(+)-binding positions include 52 to 53, Gln130, 176 to 178, Glu196, Arg201, 242 to 243, 263 to 267, 273 to 274, and Tyr322; these read GG, GMG, NA, QTSAH, and YL. Residue Cys410 is part of the active site. Residue Gly492 participates in NAD(+) binding.

It belongs to the urocanase family. It depends on NAD(+) as a cofactor.

The protein resides in the cytoplasm. The enzyme catalyses 4-imidazolone-5-propanoate = trans-urocanate + H2O. Its pathway is amino-acid degradation; L-histidine degradation into L-glutamate; N-formimidoyl-L-glutamate from L-histidine: step 2/3. In terms of biological role, catalyzes the conversion of urocanate to 4-imidazolone-5-propionate. The chain is Urocanate hydratase from Brucella ovis (strain ATCC 25840 / 63/290 / NCTC 10512).